The following is a 413-amino-acid chain: 2,3-diketo-5-methylthiopentyl-1-phosphate enolase (413 aa).

The Proton acceptor role is filled by K98. Residues K147, 173–176 (KDDE), H264, G337, and 359–360 (GG) contribute to the substrate site. Positions 173, 175, and 176 each coordinate Mg(2+). N6-carboxylysine is present on K173.

It belongs to the RuBisCO large chain family. Type IV subfamily. In terms of assembly, homodimer. Requires Mg(2+) as cofactor.

It carries out the reaction 5-methylsulfanyl-2,3-dioxopentyl phosphate = 2-hydroxy-5-methylsulfanyl-3-oxopent-1-enyl phosphate. The protein operates within amino-acid biosynthesis; L-methionine biosynthesis via salvage pathway; L-methionine from S-methyl-5-thio-alpha-D-ribose 1-phosphate: step 3/6. Functionally, catalyzes the enolization of 2,3-diketo-5-methylthiopentyl-1-phosphate (DK-MTP-1-P) into 2-hydroxy-3-keto-5-methylthiopentenyl-1-phosphate (HK-MTPenyl-1-P). This is 2,3-diketo-5-methylthiopentyl-1-phosphate enolase (mtnW) from Geobacillus kaustophilus (strain HTA426).